The primary structure comprises 342 residues: CMP-N-acetylneuraminate-beta-galactosamide-alpha-2,3-sialyltransferase 1 (342 aa).

The Cytoplasmic portion of the chain corresponds to 1–10; it reads MVTVRKRNVK. A helical; Signal-anchor for type II membrane protein transmembrane segment spans residues 11–28; it reads VFTFAFVLITVTSFLLNY. Residues 29-342 are Lumenal-facing; the sequence is KHQVTMTTWD…IEKIKFFKGR (314 aa). 3 cysteine pairs are disulfide-bonded: Cys61-Cys66, Cys63-Cys141, and Cys144-Cys283. An N-linked (GlcNAc...) asparagine glycan is attached at Asn81. Gln107 contributes to the substrate binding site. N-linked (GlcNAc...) asparagine glycosylation is present at Asn116. Positions 149 and 172 each coordinate substrate. N-linked (GlcNAc...) asparagine glycosylation is found at Asn203 and Asn229. Substrate is bound by residues Tyr232, Tyr268, Gly272, Gly292, and His301. The N-linked (GlcNAc...) asparagine glycan is linked to Asn306. His318 lines the substrate pocket. Asn325 is a glycosylation site (N-linked (GlcNAc...) asparagine).

The protein belongs to the glycosyltransferase 29 family. The soluble form derives from the membrane form by proteolytic processing.

The protein localises to the golgi apparatus. It localises to the golgi stack membrane. Its subcellular location is the secreted. The enzyme catalyses a beta-D-galactosyl-(1-&gt;3)-N-acetyl-alpha-D-galactosaminyl derivative + CMP-N-acetyl-beta-neuraminate = an N-acetyl-alpha-neuraminyl-(2-&gt;3)-beta-D-galactosyl-(1-&gt;3)-N-acetyl-alpha-D-galactosaminyl derivative + CMP + H(+). Its pathway is protein modification; protein glycosylation. Functionally, responsible for the synthesis of the sequence NeuAc-alpha-2,3-Gal-beta-1,3-GalNAc- found on sugar chains O-linked to Thr or Ser and also as a terminal sequence on certain gangliosides. SIAT4A and SIAT4B sialylate the same acceptor substrates but exhibit different Km values. The protein is CMP-N-acetylneuraminate-beta-galactosamide-alpha-2,3-sialyltransferase 1 (ST3GAL1) of Gallus gallus (Chicken).